A 178-amino-acid polypeptide reads, in one-letter code: Putative adenylate kinase (178 aa).

ATP contacts are provided by glycine 10, glycine 12, lysine 13, serine 14, and serine 15. Positions 29–50 (TVVELAEKHGCIIDEEDGEIVI) are NMP. Residues 94 to 104 (GRNWSEEKLLE) form an LID region. Residue arginine 95 coordinates ATP.

Belongs to the adenylate kinase family. AK6 subfamily. As to quaternary structure, interacts with uS11. Not a structural component of 40S pre-ribosomes, but transiently interacts with them by binding to uS11.

It catalyses the reaction AMP + ATP = 2 ADP. The enzyme catalyses ATP + H2O = ADP + phosphate + H(+). Broad-specificity nucleoside monophosphate (NMP) kinase that catalyzes the reversible transfer of the terminal phosphate group between nucleoside triphosphates and monophosphates. Also has ATPase activity. Involved in the late maturation steps of the 30S ribosomal particles, specifically 16S rRNA maturation. While NMP activity is not required for ribosome maturation, ATPase activity is. Associates transiently with small ribosomal subunit protein uS11. ATP hydrolysis breaks the interaction with uS11. May temporarily remove uS11 from the ribosome to enable a conformational change of the ribosomal RNA that is needed for the final maturation step of the small ribosomal subunit. This Archaeoglobus fulgidus (strain ATCC 49558 / DSM 4304 / JCM 9628 / NBRC 100126 / VC-16) protein is Putative adenylate kinase.